The chain runs to 247 residues: Small ribosomal subunit protein uS3 (247 aa).

One can recognise a KH type-2 domain in the interval valine 51–arginine 119. A compositionally biased stretch (basic and acidic residues) spans proline 224–glutamate 233. The tract at residues proline 224–arginine 247 is disordered.

This sequence belongs to the universal ribosomal protein uS3 family. Part of the 30S ribosomal subunit. Forms a tight complex with proteins S10 and S14.

In terms of biological role, binds the lower part of the 30S subunit head. Binds mRNA in the 70S ribosome, positioning it for translation. The sequence is that of Small ribosomal subunit protein uS3 from Jannaschia sp. (strain CCS1).